Reading from the N-terminus, the 127-residue chain is Small ribosomal subunit protein uS11 (127 aa).

This sequence belongs to the universal ribosomal protein uS11 family. Part of the 30S ribosomal subunit. Interacts with proteins S7 and S18. Binds to IF-3.

Functionally, located on the platform of the 30S subunit, it bridges several disparate RNA helices of the 16S rRNA. Forms part of the Shine-Dalgarno cleft in the 70S ribosome. This Streptococcus pyogenes serotype M49 (strain NZ131) protein is Small ribosomal subunit protein uS11.